The primary structure comprises 98 residues: NADH-ubiquinone oxidoreductase chain 4L (98 aa).

3 helical membrane passes run 2 to 22 (PPIF…TLIF), 29 to 49 (SLLC…LIIL), and 61 to 81 (ILLL…LVMV).

Belongs to the complex I subunit 4L family. In terms of assembly, core subunit of respiratory chain NADH dehydrogenase (Complex I) which is composed of 45 different subunits.

It is found in the mitochondrion inner membrane. The catalysed reaction is a ubiquinone + NADH + 5 H(+)(in) = a ubiquinol + NAD(+) + 4 H(+)(out). Functionally, core subunit of the mitochondrial membrane respiratory chain NADH dehydrogenase (Complex I) which catalyzes electron transfer from NADH through the respiratory chain, using ubiquinone as an electron acceptor. Part of the enzyme membrane arm which is embedded in the lipid bilayer and involved in proton translocation. The sequence is that of NADH-ubiquinone oxidoreductase chain 4L (MT-ND4L) from Avahi occidentalis (Western woolly lemur).